Consider the following 603-residue polypeptide: Elongation factor 4 (603 aa).

A tr-type G domain is found at 7 to 189 (VRIRNFCIIA…AVVERVPPPP (183 aa)). Residues 19-24 (DHGKST) and 136-139 (NKID) each bind GTP.

Belongs to the TRAFAC class translation factor GTPase superfamily. Classic translation factor GTPase family. LepA subfamily.

It is found in the cell inner membrane. It catalyses the reaction GTP + H2O = GDP + phosphate + H(+). Its function is as follows. Required for accurate and efficient protein synthesis under certain stress conditions. May act as a fidelity factor of the translation reaction, by catalyzing a one-codon backward translocation of tRNAs on improperly translocated ribosomes. Back-translocation proceeds from a post-translocation (POST) complex to a pre-translocation (PRE) complex, thus giving elongation factor G a second chance to translocate the tRNAs correctly. Binds to ribosomes in a GTP-dependent manner. The protein is Elongation factor 4 of Nostoc sp. (strain PCC 7120 / SAG 25.82 / UTEX 2576).